Here is a 600-residue protein sequence, read N- to C-terminus: Kynurenine 3-monooxygenase (600 aa).

A disordered region spans residues 217–242 (GDSCADEPSGCGGRKQATTKSQGSEY).

The protein belongs to the aromatic-ring hydroxylase family. KMO subfamily. FAD serves as cofactor.

The protein localises to the mitochondrion outer membrane. It carries out the reaction L-kynurenine + NADPH + O2 + H(+) = 3-hydroxy-L-kynurenine + NADP(+) + H2O. It participates in cofactor biosynthesis; NAD(+) biosynthesis; quinolinate from L-kynurenine: step 1/3. Its function is as follows. Catalyzes the hydroxylation of L-kynurenine (L-Kyn) to form 3-hydroxy-L-kynurenine (L-3OHKyn). Required for synthesis of quinolinic acid. This chain is Kynurenine 3-monooxygenase, found in Mycosarcoma maydis (Corn smut fungus).